Consider the following 340-residue polypeptide: Heat-inducible transcription repressor HrcA (340 aa).

This sequence belongs to the HrcA family.

Negative regulator of class I heat shock genes (grpE-dnaK-dnaJ and groELS operons). Prevents heat-shock induction of these operons. This chain is Heat-inducible transcription repressor HrcA, found in Mycoplasma capricolum subsp. capricolum (strain California kid / ATCC 27343 / NCTC 10154).